Here is a 212-residue protein sequence, read N- to C-terminus: Ubiquitin-like protein MDY2 (212 aa).

Residues 74 to 152 form the Ubiquitin-like domain; it reads VHLTLKKIQA…TITVMIKPNP (79 aa). Residues 150–177 form a disordered region; it reads PNPTISKEPEAEKSTNSPAPAPPQELTV.

In terms of assembly, interacts with GET4.

The protein localises to the cytoplasm. Its subcellular location is the cytosol. It is found in the nucleus. In terms of biological role, required for efficient mating. Involved in the production of alpha-factor, the KAR9 and TUB1 location to the shmoo tip and nuclear migration into pheromone-induced shmoos. The polypeptide is Ubiquitin-like protein MDY2 (MDY2) (Saccharomyces cerevisiae (strain ATCC 204508 / S288c) (Baker's yeast)).